The following is a 379-amino-acid chain: ATP-sensitive inward rectifier potassium channel 10 (379 aa).

The Cytoplasmic segment spans residues 1–61 (MTSVAKVYYS…LKDLWTTFID (61 aa)). Arg36 serves as a coordination point for 1,2-dioctanoyl-sn-glycero-3-phospho-(1D-myo-inositol-4,5-bisphosphate). Residues 62–88 (MQWRYKLLLFSATFAGTWFLFGVVWYL) form a helical membrane-spanning segment. Topologically, residues 89–114 (VAVAHGDLLELDPPANHTPCVVQVHT) are extracellular. The cysteines at positions 108 and 140 are disulfide-linked. Positions 115 to 131 (LTGAFLFSLESQTTIGY) form an intramembrane region, discontinuously helical; Pore-forming. The Selectivity filter signature appears at 128–133 (TIGYGF). The Extracellular portion of the chain corresponds to 132-140 (GFRYISEEC). Residues 141-166 (PLAIVLLIAQLVLTTILEIFITGTFL) form a helical membrane-spanning segment. Residues 167-379 (AKIARPKKRA…SALSVRISNV (213 aa)) lie on the Cytoplasmic side of the membrane. 1,2-dioctanoyl-sn-glycero-3-phospho-(1D-myo-inositol-4,5-bisphosphate)-binding residues include Lys168, Arg171, and Lys173. 210-217 (GCQVTGKL) contributes to the ATP binding site.

Belongs to the inward rectifier-type potassium channel (TC 1.A.2.1) family. KCNJ10 subfamily. In terms of assembly, homotetramer. In kidney cells, it forms heteromeric channels with Kir5.1/KCNJ16; this interaction is required for KCNJ16 localization to the basolateral membrane. Interacts with MAGI1, alone and possibly as a heteromer with KCNJ16; this interaction may facilitate KCNJ10/KCNJ16 potassium channel expression at the basolateral membrane in kidney cells. Interacts with PATJ. As to expression, expressed in kidney (at protein level). In the nephron, expressed in the distal convoluted tubule, the connecting tubule, the collecting duct and cortical thick ascending limbs.

The protein localises to the membrane. It localises to the basolateral cell membrane. It catalyses the reaction K(+)(in) = K(+)(out). Channel activity is strongly regulated by variations of cytosolic pH; channels are activated by alkaline and inhibited by acidic pH values. Inhibited by Ba(2+) and Cs(+). Activated by phosphatidylinositol 4,5 biphosphate (PtdIns(4,5)P2). Functionally, may be responsible for potassium buffering action of glial cells in the brain. Inward rectifier potassium channels are characterized by a greater tendency to allow potassium to flow into the cell rather than out of it. Their voltage dependence is regulated by the concentration of extracellular potassium; as external potassium is raised, the voltage range of the channel opening shifts to more positive voltages. The inward rectification is mainly due to the blockage of outward current by internal magnesium. Can be blocked by extracellular barium and cesium. In the kidney, together with KCNJ16, mediates basolateral K(+) recycling in distal tubules; this process is critical for Na(+) reabsorption at the tubules. The protein is ATP-sensitive inward rectifier potassium channel 10 of Homo sapiens (Human).